A 224-amino-acid chain; its full sequence is Small ribosomal subunit protein uS3 (224 aa).

A KH type-2 domain is found at 39–107; the sequence is IREFLKKKPS…DVWVEIAEVK (69 aa).

Belongs to the universal ribosomal protein uS3 family. Part of the 30S ribosomal subunit. Forms a tight complex with proteins S10 and S14.

Its function is as follows. Binds the lower part of the 30S subunit head. Binds mRNA in the 70S ribosome, positioning it for translation. In Chlamydia trachomatis serovar A (strain ATCC VR-571B / DSM 19440 / HAR-13), this protein is Small ribosomal subunit protein uS3.